We begin with the raw amino-acid sequence, 317 residues long: HTH-type transcriptional repressor PA14_22550 (317 aa).

In terms of domain architecture, HTH lysR-type spans 1-59; sequence MDKLTAMATFVKVVDAGSFTRAADALGLPKARVSQRVSDLEKHLGVRLLNRTTRALSLT. The H-T-H motif DNA-binding region spans 19 to 38; it reads FTRAADALGLPKARVSQRVS.

It belongs to the LysR transcriptional regulatory family.

In terms of biological role, represses the transcription of the operon that consists of PA14_22510 to PA14_22540. This is HTH-type transcriptional repressor PA14_22550 from Pseudomonas aeruginosa (strain UCBPP-PA14).